The following is a 495-amino-acid chain: MAVNVRDYIAENYGLFINGEFVKGSSDETIEVTNPATGETLSHITRAKDKDVDHAVEVAQEAFESWSLTSKSERAQMLRDIGDKLMAQKDKIAMIETLNNGKPIRETTAIDIPFAARHFHYFASVIETEEGTVNDIDKDTMSIVRHEPIGVVGAVVAWNFPMLLAAWKIAPAIAAGNTIVIQPSSSTPLSLLEVAKIFQEVLPKGVVNILTGKGSESGNAIFNHDGVDKLSFTGSTDVGYQVAEAAAKHLVPATLELGGKSANIILDDANLDLAVEGIQLGILFNQGEVCSAGSRLLVHEKIYDQLVPRLQEAFSNIKVGDPQDEATQMGSQTGKDQLDKIQSYIDVAKESDAQILAGGHRLTENGLDKGFFFEPTLIAVPDNHHKLAQEEIFGPVLTVIKVKDDQEAIDIANDSKYGLAGGVFSQNITRALNIAKAVRTGRIWINTYNQVPEGAPFGGYKKSGIGRETYKGALSNYQQVKNIYIDTSNALKGLY.

Position 212-218 (glycine 212–glycine 218) interacts with NAD(+). Residues glutamate 256 and cysteine 290 contribute to the active site.

The protein belongs to the aldehyde dehydrogenase family.

The catalysed reaction is an aldehyde + NAD(+) + H2O = a carboxylate + NADH + 2 H(+). The polypeptide is Putative aldehyde dehydrogenase AldA (aldA) (Staphylococcus aureus (strain bovine RF122 / ET3-1)).